The sequence spans 478 residues: Aspartyl/glutamyl-tRNA(Asn/Gln) amidotransferase subunit B (478 aa).

Belongs to the GatB/GatE family. GatB subfamily. Heterotrimer of A, B and C subunits.

It carries out the reaction L-glutamyl-tRNA(Gln) + L-glutamine + ATP + H2O = L-glutaminyl-tRNA(Gln) + L-glutamate + ADP + phosphate + H(+). It catalyses the reaction L-aspartyl-tRNA(Asn) + L-glutamine + ATP + H2O = L-asparaginyl-tRNA(Asn) + L-glutamate + ADP + phosphate + 2 H(+). In terms of biological role, allows the formation of correctly charged Asn-tRNA(Asn) or Gln-tRNA(Gln) through the transamidation of misacylated Asp-tRNA(Asn) or Glu-tRNA(Gln) in organisms which lack either or both of asparaginyl-tRNA or glutaminyl-tRNA synthetases. The reaction takes place in the presence of glutamine and ATP through an activated phospho-Asp-tRNA(Asn) or phospho-Glu-tRNA(Gln). This Dichelobacter nodosus (strain VCS1703A) protein is Aspartyl/glutamyl-tRNA(Asn/Gln) amidotransferase subunit B.